A 128-amino-acid polypeptide reads, in one-letter code: Small ribosomal subunit protein uS11 (128 aa).

Belongs to the universal ribosomal protein uS11 family. As to quaternary structure, part of the 30S ribosomal subunit. Interacts with proteins S7 and S18. Binds to IF-3.

Located on the platform of the 30S subunit, it bridges several disparate RNA helices of the 16S rRNA. Forms part of the Shine-Dalgarno cleft in the 70S ribosome. The sequence is that of Small ribosomal subunit protein uS11 from Wolbachia pipientis subsp. Culex pipiens (strain wPip).